The sequence spans 143 residues: Oxoglutarate dehydrogenase inhibitor (143 aa).

The residue at position 14 (T14) is a Phosphothreonine. The FHA domain occupies 68-117; sequence TTAGRHPESDIFLDDVTVSRRHAEFRINEGEFEVVDVGSLNGTYVNREPR.

The protein resides in the cytoplasm. Functionally, an essential component of the PknG signaling pathway. When unphosphorylated, it inhibits the activity of 2-oxoglutarate dehydrogenase. When phosphorylated it does not inhibit 2-oxoglutarate dehydrogenase. The chain is Oxoglutarate dehydrogenase inhibitor (odhI) from Corynebacterium glutamicum (strain ATCC 13032 / DSM 20300 / JCM 1318 / BCRC 11384 / CCUG 27702 / LMG 3730 / NBRC 12168 / NCIMB 10025 / NRRL B-2784 / 534).